We begin with the raw amino-acid sequence, 164 residues long: MADS-box transcription factor 51 (164 aa).

Positions Ala-2 to Ser-62 constitute an MADS-box domain. Positions Thr-133–Ala-164 are disordered.

In terms of tissue distribution, widely expressed.

It is found in the nucleus. Probable transcription factor involved in the regulation of flowering time under short day (SD) conditions. Functions as a promoter of flowering under SD conditions, upstream of EHD1, HD3A and MADS14, but downstream of GIGANTEA (GI). May transmit a SD promotion signal from GI to EHD1. Functions independently of MADS50 to control flowering time. This chain is MADS-box transcription factor 51, found in Oryza sativa subsp. japonica (Rice).